A 101-amino-acid polypeptide reads, in one-letter code: Ribonuclease P protein component 1 (101 aa).

Belongs to the eukaryotic/archaeal RNase P protein component 1 family. As to quaternary structure, consists of a catalytic RNA component and at least 4-5 protein subunits.

It is found in the cytoplasm. It catalyses the reaction Endonucleolytic cleavage of RNA, removing 5'-extranucleotides from tRNA precursor.. Its function is as follows. Part of ribonuclease P, a protein complex that generates mature tRNA molecules by cleaving their 5'-ends. The polypeptide is Ribonuclease P protein component 1 (Methanococcoides burtonii (strain DSM 6242 / NBRC 107633 / OCM 468 / ACE-M)).